A 377-amino-acid polypeptide reads, in one-letter code: Nitric oxide reductase FlRd-NAD(+) reductase (377 aa).

It belongs to the FAD-dependent oxidoreductase family. It depends on FAD as a cofactor.

It localises to the cytoplasm. The enzyme catalyses 2 reduced [nitric oxide reductase rubredoxin domain] + NAD(+) + H(+) = 2 oxidized [nitric oxide reductase rubredoxin domain] + NADH. It functions in the pathway nitrogen metabolism; nitric oxide reduction. One of at least two accessory proteins for anaerobic nitric oxide (NO) reductase. Reduces the rubredoxin moiety of NO reductase. This chain is Nitric oxide reductase FlRd-NAD(+) reductase, found in Salmonella paratyphi C (strain RKS4594).